Consider the following 375-residue polypeptide: Queuine tRNA-ribosyltransferase (375 aa).

Residue aspartate 93 is the Proton acceptor of the active site. Residues aspartate 93 to tyrosine 97, aspartate 147, glutamine 194, and glycine 221 contribute to the substrate site. The interval glycine 252–aspartate 258 is RNA binding. The active-site Nucleophile is aspartate 271. Residues threonine 276–arginine 280 are RNA binding; important for wobble base 34 recognition. Residues cysteine 309, cysteine 311, cysteine 314, and histidine 340 each coordinate Zn(2+).

This sequence belongs to the queuine tRNA-ribosyltransferase family. As to quaternary structure, homodimer. Within each dimer, one monomer is responsible for RNA recognition and catalysis, while the other monomer binds to the replacement base PreQ1. The cofactor is Zn(2+).

It carries out the reaction 7-aminomethyl-7-carbaguanine + guanosine(34) in tRNA = 7-aminomethyl-7-carbaguanosine(34) in tRNA + guanine. It participates in tRNA modification; tRNA-queuosine biosynthesis. Functionally, catalyzes the base-exchange of a guanine (G) residue with the queuine precursor 7-aminomethyl-7-deazaguanine (PreQ1) at position 34 (anticodon wobble position) in tRNAs with GU(N) anticodons (tRNA-Asp, -Asn, -His and -Tyr). Catalysis occurs through a double-displacement mechanism. The nucleophile active site attacks the C1' of nucleotide 34 to detach the guanine base from the RNA, forming a covalent enzyme-RNA intermediate. The proton acceptor active site deprotonates the incoming PreQ1, allowing a nucleophilic attack on the C1' of the ribose to form the product. After dissociation, two additional enzymatic reactions on the tRNA convert PreQ1 to queuine (Q), resulting in the hypermodified nucleoside queuosine (7-(((4,5-cis-dihydroxy-2-cyclopenten-1-yl)amino)methyl)-7-deazaguanosine). This Sphingopyxis alaskensis (strain DSM 13593 / LMG 18877 / RB2256) (Sphingomonas alaskensis) protein is Queuine tRNA-ribosyltransferase.